The sequence spans 630 residues: Prolactin receptor (630 aa).

The signal sequence occupies residues M1–G23. Over T24 to E234 the chain is Extracellular. Fibronectin type-III domains lie at K31–P128 and P130–Y230. 2 disulfides stabilise this stretch: C37-C47 and C76-C87. N92 and N101 each carry an N-linked (GlcNAc...) asparagine glycan. Positions 212 and 213 each coordinate Zn(2+). Positions W216–S220 match the WSXWS motif motif. Residues K235 to M258 form a helical membrane-spanning segment. The Cytoplasmic portion of the chain corresponds to N259–T630. The Box 1 motif motif lies at M267 to K275. Residues K339–K389 form a disordered region. Low complexity predominate over residues S340–D357. The span at Q380–K389 shows a compositional bias: basic and acidic residues.

This sequence belongs to the type I cytokine receptor family. Type 1 subfamily.

The protein resides in the membrane. Functionally, this is a receptor for the anterior pituitary hormone prolactin. This is Prolactin receptor (prlr) from Oreochromis niloticus (Nile tilapia).